Reading from the N-terminus, the 361-residue chain is Chorismate synthase (361 aa).

NADP(+)-binding residues include Arg48 and Arg54. Residues Arg131–Ser133, Asn243–Ala244, Gly287, Lys302–Ser306, and Arg328 contribute to the FMN site.

It belongs to the chorismate synthase family. Homotetramer. FMNH2 is required as a cofactor.

It carries out the reaction 5-O-(1-carboxyvinyl)-3-phosphoshikimate = chorismate + phosphate. It functions in the pathway metabolic intermediate biosynthesis; chorismate biosynthesis; chorismate from D-erythrose 4-phosphate and phosphoenolpyruvate: step 7/7. In terms of biological role, catalyzes the anti-1,4-elimination of the C-3 phosphate and the C-6 proR hydrogen from 5-enolpyruvylshikimate-3-phosphate (EPSP) to yield chorismate, which is the branch point compound that serves as the starting substrate for the three terminal pathways of aromatic amino acid biosynthesis. This reaction introduces a second double bond into the aromatic ring system. This chain is Chorismate synthase, found in Rhodopseudomonas palustris (strain BisB5).